A 273-amino-acid polypeptide reads, in one-letter code: Dermonecrotic toxin LhSicTox-alphaIA2bi (273 aa).

Mg(2+) is bound by residues Glu-25 and Asp-27. The Nucleophile role is filled by His-41. 2 disulfides stabilise this stretch: Cys-45–Cys-51 and Cys-47–Cys-190. Asp-85 serves as a coordination point for Mg(2+).

This sequence belongs to the arthropod phospholipase D family. Class II subfamily. Requires Mg(2+) as cofactor. Expressed by the venom gland.

Its subcellular location is the secreted. It carries out the reaction an N-(acyl)-sphingosylphosphocholine = an N-(acyl)-sphingosyl-1,3-cyclic phosphate + choline. It catalyses the reaction an N-(acyl)-sphingosylphosphoethanolamine = an N-(acyl)-sphingosyl-1,3-cyclic phosphate + ethanolamine. The enzyme catalyses a 1-acyl-sn-glycero-3-phosphocholine = a 1-acyl-sn-glycero-2,3-cyclic phosphate + choline. The catalysed reaction is a 1-acyl-sn-glycero-3-phosphoethanolamine = a 1-acyl-sn-glycero-2,3-cyclic phosphate + ethanolamine. In terms of biological role, dermonecrotic toxins cleave the phosphodiester linkage between the phosphate and headgroup of certain phospholipids (sphingolipid and lysolipid substrates), forming an alcohol (often choline) and a cyclic phosphate. This toxin acts on sphingomyelin (SM). It may also act on ceramide phosphoethanolamine (CPE), lysophosphatidylcholine (LPC) and lysophosphatidylethanolamine (LPE), but not on lysophosphatidylserine (LPS), and lysophosphatidylglycerol (LPG). It acts by transphosphatidylation, releasing exclusively cyclic phosphate products as second products. Induces dermonecrosis, hemolysis, increased vascular permeability, edema, inflammatory response, and platelet aggregation. The sequence is that of Dermonecrotic toxin LhSicTox-alphaIA2bi from Loxosceles hirsuta (Recluse spider).